Here is a 191-residue protein sequence, read N- to C-terminus: Peptidyl-tRNA hydrolase (191 aa).

Y17 provides a ligand contact to tRNA. H22 (proton acceptor) is an active-site residue. The tRNA site is built by Y68, N70, and N116.

Belongs to the PTH family. In terms of assembly, monomer.

It localises to the cytoplasm. The catalysed reaction is an N-acyl-L-alpha-aminoacyl-tRNA + H2O = an N-acyl-L-amino acid + a tRNA + H(+). Functionally, hydrolyzes ribosome-free peptidyl-tRNAs (with 1 or more amino acids incorporated), which drop off the ribosome during protein synthesis, or as a result of ribosome stalling. In terms of biological role, catalyzes the release of premature peptidyl moieties from peptidyl-tRNA molecules trapped in stalled 50S ribosomal subunits, and thus maintains levels of free tRNAs and 50S ribosomes. The protein is Peptidyl-tRNA hydrolase of Mycobacterium ulcerans (strain Agy99).